A 398-amino-acid chain; its full sequence is 4-hydroxy-3-methylbut-2-enyl diphosphate reductase (398 aa).

C66 lines the [4Fe-4S] cluster pocket. (2E)-4-hydroxy-3-methylbut-2-enyl diphosphate is bound at residue H96. H96 lines the dimethylallyl diphosphate pocket. H96 is a binding site for isopentenyl diphosphate. C157 lines the [4Fe-4S] cluster pocket. H185 is a binding site for (2E)-4-hydroxy-3-methylbut-2-enyl diphosphate. A dimethylallyl diphosphate-binding site is contributed by H185. Isopentenyl diphosphate is bound at residue H185. The active-site Proton donor is E187. T250 contacts (2E)-4-hydroxy-3-methylbut-2-enyl diphosphate. C288 is a [4Fe-4S] cluster binding site. S317, S318, N319, and S380 together coordinate (2E)-4-hydroxy-3-methylbut-2-enyl diphosphate. Residues S317, S318, N319, and S380 each contribute to the dimethylallyl diphosphate site. Isopentenyl diphosphate contacts are provided by S317, S318, N319, and S380.

It belongs to the IspH family. It depends on [4Fe-4S] cluster as a cofactor.

It carries out the reaction isopentenyl diphosphate + 2 oxidized [2Fe-2S]-[ferredoxin] + H2O = (2E)-4-hydroxy-3-methylbut-2-enyl diphosphate + 2 reduced [2Fe-2S]-[ferredoxin] + 2 H(+). The catalysed reaction is dimethylallyl diphosphate + 2 oxidized [2Fe-2S]-[ferredoxin] + H2O = (2E)-4-hydroxy-3-methylbut-2-enyl diphosphate + 2 reduced [2Fe-2S]-[ferredoxin] + 2 H(+). It functions in the pathway isoprenoid biosynthesis; dimethylallyl diphosphate biosynthesis; dimethylallyl diphosphate from (2E)-4-hydroxy-3-methylbutenyl diphosphate: step 1/1. It participates in isoprenoid biosynthesis; isopentenyl diphosphate biosynthesis via DXP pathway; isopentenyl diphosphate from 1-deoxy-D-xylulose 5-phosphate: step 6/6. Its function is as follows. Catalyzes the conversion of 1-hydroxy-2-methyl-2-(E)-butenyl 4-diphosphate (HMBPP) into a mixture of isopentenyl diphosphate (IPP) and dimethylallyl diphosphate (DMAPP). Acts in the terminal step of the DOXP/MEP pathway for isoprenoid precursor biosynthesis. This chain is 4-hydroxy-3-methylbut-2-enyl diphosphate reductase, found in Prochlorococcus marinus subsp. pastoris (strain CCMP1986 / NIES-2087 / MED4).